Here is a 181-residue protein sequence, read N- to C-terminus: Large ribosomal subunit protein bL17 (181 aa).

Positions 141 to 159 (KAASATAESAPVATANDAA) are enriched in low complexity. The tract at residues 141-181 (KAASATAESAPVATANDAAPAEEAEVQGVKDPAEDCEAKAD) is disordered. Over residues 171–181 (DPAEDCEAKAD) the composition is skewed to basic and acidic residues.

Belongs to the bacterial ribosomal protein bL17 family. Part of the 50S ribosomal subunit. Contacts protein L32.

This is Large ribosomal subunit protein bL17 from Geotalea daltonii (strain DSM 22248 / JCM 15807 / FRC-32) (Geobacter daltonii).